A 1036-amino-acid chain; its full sequence is MDGPPSPTRVPPSYTDGPPSYVDTPIADEDTMSVPGNNSSLRLLPQGQDEYRSISPPNRVSPDRYHRPAASTAYSSRPGSSLGRAPSIPLSSSNPRSPIRPSTPSRVSTDWTRPPAPSVAYEPPDINGSPRPGTPSSQYGGSPRRPLPPAPLFSAKGAAAETTIPMPEPESENDVFVDNYSIMPDNDPRASLKSAHSYTTDSTFTEDDDITNEKLNHYGPAPEGRQDRRGLREAQMTKKEVRLINGELILECKIPTILHSFLPRRDEREFTHMRYTAVTCDPDDFVVKGYKLRQNIGPTMRETELFICVTMYNEGEIEFTRTMHGIMRNIAHFCSRTRSRTWGKDGWQKIVVCVIADGRQKVHPRTLNALAAMGVYQDGIAKNVVNQKEVTAHVYEYTTQVSLDETLKFKGAEKGIVPCQMIFCLKEKNKKKLNSHRWFFNAFGRALIPNVCILLDVGTKPDSKALYHLWKAFDQNSNVAGAAGEIKADKGKGWLGLLNPLVASQNFEYKISNILDKPLESVFGYITVLPGALSAYRYHALQNDPSGHGPLSQYFKGETLHGRDADVFTANMYLAEDRILCWELVAKRDEQWVLKFVKSAYGETDVPDTVPEFISQRRRWLNGAFFAAVYALVHFKQIWRTDHSLTRKILLHIEFIYQFISLLFTFFSLANFYLTFYFVAGSLADPTIDPFGHNIGKYIFVILRYVCVLLICLQFILSLGNRPQGAKKLFLSTMVTYSIIMAYTTFASVYIVIKQLTTHALEKTDPNNPYKLGNNIFTNLIVSSVSTIGLFFLMSFLYLDPWHMFTSSAQYFALLPSYICTLQVYAFCNTHDVTWGTKGDNVMHTDLGAAKAIGSGNTVEVEMPSEQLDIDSAYDVALRNLRDRVEVPKPPVSENQLQEDYYKSVRTYVVASYMVCNAILAMAVSEAYPVGSHIGSNFYLTFILWSVAALALFRAIGSSAFGVINIVSAIAEGRIQAKFERIFGGGDERGRHRAGLGSGFSESGKTGITSGSGMSGMSLSDVTSKISEKFSWMSGK.

Pro residues predominate over residues 1–10 (MDGPPSPTRV). Residues 1–153 (MDGPPSPTRV…RRPLPPAPLF (153 aa)) are disordered. An N-linked (GlcNAc...) asparagine glycan is attached at Asn38. The span at 86–108 (PSIPLSSSNPRSPIRPSTPSRVS) shows a compositional bias: low complexity. A glycan (N-linked (GlcNAc...) asparagine) is linked at Asn179. Positions 189-229 (RASLKSAHSYTTDSTFTEDDDITNEKLNHYGPAPEGRQDRR) are disordered. Residues 194–203 (SAHSYTTDST) are compositionally biased toward polar residues. The next 7 membrane-spanning stretches (helical) occupy residues 659 to 679 (FISLLFTFFSLANFYLTFYFV), 699 to 719 (IFVILRYVCVLLICLQFILSL), 733 to 753 (TMVTYSIIMAYTTFASVYIVI), 776 to 796 (IFTNLIVSSVSTIGLFFLMSF), 808 to 828 (SAQYFALLPSYICTLQVYAFC), 908 to 928 (YVVASYMVCNAILAMAVSEAY), and 945 to 967 (WSVAALALFRAIGSSAFGVINIV). The interval 994–1019 (AGLGSGFSESGKTGITSGSGMSGMSL) is disordered. Positions 1001 to 1019 (SESGKTGITSGSGMSGMSL) are enriched in low complexity.

The protein belongs to the chitin synthase family. Class II subfamily.

The protein localises to the cell membrane. It carries out the reaction [(1-&gt;4)-N-acetyl-beta-D-glucosaminyl](n) + UDP-N-acetyl-alpha-D-glucosamine = [(1-&gt;4)-N-acetyl-beta-D-glucosaminyl](n+1) + UDP + H(+). Its function is as follows. Polymerizes chitin, a structural polymer of the cell wall and septum, by transferring the sugar moiety of UDP-GlcNAc to the non-reducing end of the growing chitin polymer. CHS1 mainly responsible for normal yeast cell reproductive growth. In Exophiala dermatitidis (strain ATCC 34100 / CBS 525.76 / NIH/UT8656) (Black yeast), this protein is Chitin synthase 1.